Reading from the N-terminus, the 201-residue chain is Small ribosomal subunit protein uS4 (201 aa).

The tract at residues 19 to 41 (LVGGSSAYEKRPYPPGQHGRARI) is disordered. Residues 91–157 (SRLDNVVYRA…LPFEVARETA (67 aa)) enclose the S4 RNA-binding domain.

It belongs to the universal ribosomal protein uS4 family. Part of the 30S ribosomal subunit. Contacts protein S5. The interaction surface between S4 and S5 is involved in control of translational fidelity.

In terms of biological role, one of the primary rRNA binding proteins, it binds directly to 16S rRNA where it nucleates assembly of the body of the 30S subunit. Its function is as follows. With S5 and S12 plays an important role in translational accuracy. The polypeptide is Small ribosomal subunit protein uS4 (Mycobacteroides abscessus (strain ATCC 19977 / DSM 44196 / CCUG 20993 / CIP 104536 / JCM 13569 / NCTC 13031 / TMC 1543 / L948) (Mycobacterium abscessus)).